We begin with the raw amino-acid sequence, 435 residues long: Serine carboxypeptidase-like 12 (435 aa).

The first 21 residues, 1 to 21, serve as a signal peptide directing secretion; sequence MKSTPKLLLLLLFIINHHVDS. Disulfide bonds link C80-C323, C244-C258, and C282-C289. A glycan (N-linked (GlcNAc...) asparagine) is linked at N101. S176 is an active-site residue. N313, N336, and N344 each carry an N-linked (GlcNAc...) asparagine glycan. The active site involves D360. Residue N376 is glycosylated (N-linked (GlcNAc...) asparagine). H413 is an active-site residue. Residue N420 is glycosylated (N-linked (GlcNAc...) asparagine).

Belongs to the peptidase S10 family. As to expression, expressed in roots.

The protein localises to the secreted. Probable carboxypeptidase. This chain is Serine carboxypeptidase-like 12 (SCPL12), found in Arabidopsis thaliana (Mouse-ear cress).